Reading from the N-terminus, the 170-residue chain is MIIERLVGNLRDLNPLDFSVDHVDLEWFETRKKIARFKTRQGKDIAIRLKDAPKLGLSQGDILFKEEKEIIAVNILDSEVIHIQAKSVAEVAKICYEIGNRHAALYYGESQFEFKTPFEKPTLALLEKLGVQNRVLSSKLDSKERLTVSMPHSEPNFKVSLASDFKVVVK.

Belongs to the UreE family.

Its subcellular location is the cytoplasm. Its function is as follows. Involved in urease metallocenter assembly. Binds nickel. Probably functions as a nickel donor during metallocenter assembly. This is Urease accessory protein UreE from Helicobacter pylori (strain ATCC 700392 / 26695) (Campylobacter pylori).